Consider the following 422-residue polypeptide: Protein MANNAN SYNTHESIS-RELATED 1 (422 aa).

The Cytoplasmic portion of the chain corresponds to 1–6 (MGVDLR). The chain crosses the membrane as a helical; Signal-anchor for type II membrane protein span at residues 7–26 (QVVAGILTITMFVMLGQMLH). The Lumenal segment spans residues 27–422 (RDYFDSLQEK…KNHLAYSCFC (396 aa)). 263–265 (DLR) is a binding site for substrate.

The protein belongs to the glycosyltransferase GT106 family. In terms of tissue distribution, widely expressed.

It is found in the golgi apparatus membrane. Its pathway is glycan biosynthesis. In terms of biological role, glycosyltransferase involved in mannan biosynthesis. In Arabidopsis thaliana (Mouse-ear cress), this protein is Protein MANNAN SYNTHESIS-RELATED 1.